The sequence spans 208 residues: Protein-L-isoaspartate O-methyltransferase (208 aa).

Ser-59 is an active-site residue.

The protein belongs to the methyltransferase superfamily. L-isoaspartyl/D-aspartyl protein methyltransferase family.

Its subcellular location is the cytoplasm. It carries out the reaction [protein]-L-isoaspartate + S-adenosyl-L-methionine = [protein]-L-isoaspartate alpha-methyl ester + S-adenosyl-L-homocysteine. Its function is as follows. Catalyzes the methyl esterification of L-isoaspartyl residues in peptides and proteins that result from spontaneous decomposition of normal L-aspartyl and L-asparaginyl residues. It plays a role in the repair and/or degradation of damaged proteins. This Pectobacterium carotovorum subsp. carotovorum (strain PC1) protein is Protein-L-isoaspartate O-methyltransferase.